We begin with the raw amino-acid sequence, 234 residues long: Large ribosomal subunit protein uL1 (234 aa).

It belongs to the universal ribosomal protein uL1 family. In terms of assembly, part of the 50S ribosomal subunit.

In terms of biological role, binds directly to 23S rRNA. The L1 stalk is quite mobile in the ribosome, and is involved in E site tRNA release. Functionally, protein L1 is also a translational repressor protein, it controls the translation of the L11 operon by binding to its mRNA. This is Large ribosomal subunit protein uL1 from Tolumonas auensis (strain DSM 9187 / NBRC 110442 / TA 4).